The following is a 378-amino-acid chain: Chaperone protein DnaJ 2 (378 aa).

A J domain is found at 4 to 68; it reads DYYAVLGVRR…QKKQVYDLGG (65 aa). The CR-type zinc-finger motif lies at 130–212; sequence GTTKDIQVDT…CAGDGRVRSR (83 aa). Positions 143, 146, 160, 163, 186, 189, 200, and 203 each coordinate Zn(2+). CXXCXGXG motif repeat units lie at residues 143-150, 160-167, 186-193, and 200-207; these read CNTCNGEG, CDMCRGRG, CPQCQGFG, and CPECAGDG. 2 disordered regions span residues 297–319 and 351–378; these read RPGT…LRGG and RGEE…FNGR. Residues 358 to 367 show a composition bias toward polar residues; it reads GQFQPGQQGL.

It belongs to the DnaJ family. In terms of assembly, homodimer. It depends on Zn(2+) as a cofactor.

It localises to the cytoplasm. In terms of biological role, participates actively in the response to hyperosmotic and heat shock by preventing the aggregation of stress-denatured proteins and by disaggregating proteins, also in an autonomous, DnaK-independent fashion. Unfolded proteins bind initially to DnaJ; upon interaction with the DnaJ-bound protein, DnaK hydrolyzes its bound ATP, resulting in the formation of a stable complex. GrpE releases ADP from DnaK; ATP binding to DnaK triggers the release of the substrate protein, thus completing the reaction cycle. Several rounds of ATP-dependent interactions between DnaJ, DnaK and GrpE are required for fully efficient folding. Also involved, together with DnaK and GrpE, in the DNA replication of plasmids through activation of initiation proteins. The chain is Chaperone protein DnaJ 2 from Streptomyces coelicolor (strain ATCC BAA-471 / A3(2) / M145).